Reading from the N-terminus, the 255-residue chain is MLRVENLHVRRGGKDVLAGIDLQLLPGEVLGVLGPNGAGKSSLLGGLSGELAAHQGQVLLDDQELAHWSGAERAQRLAVLPQASSLDFAFRVEEVVALGRLPHQTGRVRDEEIVNAALNAADVAHLSGRSYLALSGGERQRVHLARVLAQLWPGQPGHNLLLDEPTSALDPLHQHVTLQAIRAFADRGAAVLVILHDLNLAARYCDRVLLLEGGRPHSLGTPTAVLRPEPLKAVFGLEVLVQEHPERGHPLIIAR.

One can recognise an ABC transporter domain in the interval 2–238; the sequence is LRVENLHVRR…EPLKAVFGLE (237 aa). 34-41 contributes to the ATP binding site; that stretch reads GPNGAGKS.

It belongs to the ABC transporter superfamily. Heme (hemin) importer (TC 3.A.1.14.5) family. As to quaternary structure, the complex is composed of two ATP-binding proteins (HmuV), two transmembrane proteins (HmuU) and a solute-binding protein (HmuT).

It localises to the cell inner membrane. Part of the ABC transporter complex HmuTUV involved in hemin import. Responsible for energy coupling to the transport system. The sequence is that of Hemin import ATP-binding protein HmuV from Pseudomonas fluorescens (strain ATCC BAA-477 / NRRL B-23932 / Pf-5).